We begin with the raw amino-acid sequence, 346 residues long: Trans-enoyl reductase FFUJ_12240 (346 aa).

Residue 40 to 43 (HDAK) coordinates NADP(+). 124–131 (LAIATAGL) contributes to the substrate binding site. Residues 157–160 (ATAT), 180–183 (SPSN), Tyr198, and 245–246 (LE) each bind NADP(+). 266 to 270 (APSIL) serves as a coordination point for substrate. 335–336 (VH) lines the NADP(+) pocket.

The protein belongs to the zinc-containing alcohol dehydrogenase family.

Functionally, trans-enoyl reductase; part of the gene cluster that mediates the biosynthesis of fujikurins A-D, secondary metabolites playing a role during rice infection. The polyketide synthase PKS19 acts with the trans-enoyl reductase FFUJ_12240 and the polyketide transferase FFUJ_12241 to produce fujikurins, however, the biosynthesis pathway has not been identified yet. The polypeptide is Trans-enoyl reductase FFUJ_12240 (Gibberella fujikuroi (strain CBS 195.34 / IMI 58289 / NRRL A-6831) (Bakanae and foot rot disease fungus)).